Reading from the N-terminus, the 2130-residue chain is DNA polymerase zeta catalytic subunit (2130 aa).

Disordered regions lie at residues 528–635 (PAES…TGTL), 734–891 (GCEI…HDEA), 927–954 (FTPSSGIRPPETETTPQLSPKSNESNTP), and 1189–1243 (QAKD…SAAQ). Low complexity predominate over residues 553–574 (TPIKSISSKSKSSPSKTPTTPI). Polar residues predominate over residues 620–629 (PRLSLQLDQG). The segment covering 735–753 (CEIERPHRSEGSALDELKP) has biased composition (basic and acidic residues). Polar residues-rich tracts occupy residues 771–786 (SEIQTTGPRVTTTSLD), 794–808 (LSQSPKENTKTSMNG), and 818–835 (DSSSNSESPHQQENSVSE). Basic and acidic residues predominate over residues 840 to 860 (LESKPKKSDETARSCDEKLQR). A compositionally biased stretch (polar residues) spans 938 to 954 (TETTPQLSPKSNESNTP). The span at 1228 to 1243 (PSSQSSEQSVSSSAAQ) shows a compositional bias: low complexity. Zn(2+) contacts are provided by Cys2041, Cys2045, Cys2054, and Cys2057. Residues Cys2086, Cys2089, Cys2098, and Cys2103 each coordinate [4Fe-4S] cluster. Residues 2086–2103 (CQACCGRLGSLQCDSLDC) carry the CysB motif motif.

It belongs to the DNA polymerase type-B family. Catalytic subunit of the zeta DNA polymerase complex, which consists of PolZ1/DNApol-zeta and the accessory component PolZ2/Rev7. Interacts with the apurinic/apyrimidinic (AP) endonuclease Rrp1; the interaction is likely indirect and mediated via PolZ2. [4Fe-4S] cluster is required as a cofactor.

It carries out the reaction DNA(n) + a 2'-deoxyribonucleoside 5'-triphosphate = DNA(n+1) + diphosphate. Inhibited by tetracyclic diterpene antibiotic aphidicolin. In terms of biological role, as the catalytic subunit of the DNA polymerase zeta complex, plays a crucial role in translesion DNA synthesis (TLS) and various DNA repair mechanisms. Lacks an intrinsic 3'-5' exonuclease activity and thus has no proofreading function. During homologous recombination (HR) repair, has a overlapping role with the error-prone translesion polymerase eta to initiate repair synthesis which is completed by end joining or another polymerase that can bind and reinitiate synthesis. May participate in the Rrp1-dependent base excision repair (BER) pathway responsible for repair of DNA lesions that gives rise to apurinic/apyrimidinic (AP) sites. Unlike mammalian orthologs, it is not an error-prone polymerase. This Drosophila melanogaster (Fruit fly) protein is DNA polymerase zeta catalytic subunit.